The following is a 498-amino-acid chain: Excisase C (498 aa).

The 184-residue stretch at 263 to 446 (KIIYSFDLFE…FGIENRKKAF (184 aa)) folds into the Tyr recombinase domain. Active-site residues include Arg-306, Lys-336, Arg-401, and His-424. The active-site O-(3'-phospho-DNA)-tyrosine intermediate is Tyr-433.

The protein belongs to the XisA/XisC recombinase family.

Functionally, essential for DNA excision. Site specific recombinase necessary for the excision of the 10.5 kb hupL element during heterocyst differentiation. The chain is Excisase C (xisC) from Nostoc sp. (strain PCC 7120 / SAG 25.82 / UTEX 2576).